A 396-amino-acid polypeptide reads, in one-letter code: 1-deoxy-D-xylulose 5-phosphate reductoisomerase (396 aa).

NADPH is bound by residues T10, G11, S12, I13, G36, K37, N38, and N124. K125 provides a ligand contact to 1-deoxy-D-xylulose 5-phosphate. E126 serves as a coordination point for NADPH. D150 provides a ligand contact to Mn(2+). Positions 151, 152, 186, and 209 each coordinate 1-deoxy-D-xylulose 5-phosphate. A Mn(2+)-binding site is contributed by E152. G215 is an NADPH binding site. Positions 222, 227, 228, and 231 each coordinate 1-deoxy-D-xylulose 5-phosphate. A Mn(2+)-binding site is contributed by E231.

Belongs to the DXR family. Requires Mg(2+) as cofactor. Mn(2+) is required as a cofactor.

The enzyme catalyses 2-C-methyl-D-erythritol 4-phosphate + NADP(+) = 1-deoxy-D-xylulose 5-phosphate + NADPH + H(+). It functions in the pathway isoprenoid biosynthesis; isopentenyl diphosphate biosynthesis via DXP pathway; isopentenyl diphosphate from 1-deoxy-D-xylulose 5-phosphate: step 1/6. Its function is as follows. Catalyzes the NADPH-dependent rearrangement and reduction of 1-deoxy-D-xylulose-5-phosphate (DXP) to 2-C-methyl-D-erythritol 4-phosphate (MEP). In Actinobacillus pleuropneumoniae serotype 5b (strain L20), this protein is 1-deoxy-D-xylulose 5-phosphate reductoisomerase.